The primary structure comprises 619 residues: Phosphomethylpyrimidine synthase (619 aa).

The span at 93-104 (IKPEDNGLKGPD) shows a compositional bias: basic and acidic residues. The disordered stretch occupies residues 93 to 114 (IKPEDNGLKGPDRSGGVTPFPN). Substrate is bound by residues Asn217, Met246, Tyr275, His311, 331–333 (SRG), 372–375 (DGLR), and Glu411. Residue His415 participates in Zn(2+) binding. A substrate-binding site is contributed by Tyr438. His479 is a binding site for Zn(2+). [4Fe-4S] cluster-binding residues include Cys559, Cys562, and Cys567.

The protein belongs to the ThiC family. As to quaternary structure, homodimer. Requires [4Fe-4S] cluster as cofactor.

The catalysed reaction is 5-amino-1-(5-phospho-beta-D-ribosyl)imidazole + S-adenosyl-L-methionine = 4-amino-2-methyl-5-(phosphooxymethyl)pyrimidine + CO + 5'-deoxyadenosine + formate + L-methionine + 3 H(+). It participates in cofactor biosynthesis; thiamine diphosphate biosynthesis. In terms of biological role, catalyzes the synthesis of the hydroxymethylpyrimidine phosphate (HMP-P) moiety of thiamine from aminoimidazole ribotide (AIR) in a radical S-adenosyl-L-methionine (SAM)-dependent reaction. In Rhizorhabdus wittichii (strain DSM 6014 / CCUG 31198 / JCM 15750 / NBRC 105917 / EY 4224 / RW1) (Sphingomonas wittichii), this protein is Phosphomethylpyrimidine synthase.